A 232-amino-acid chain; its full sequence is Ion-translocating oxidoreductase complex subunit E (232 aa).

6 helical membrane passes run 18-38, 39-59, 69-89, 93-113, 127-147, and 182-202; these read GLVQ…ITNA, LGLG…VSLV, IPVF…LINA, GLYL…IIIG, AAFD…VLGA, and PFLL…LIAL.

It belongs to the NqrDE/RnfAE family. As to quaternary structure, the complex is composed of six subunits: RnfA, RnfB, RnfC, RnfD, RnfE and RnfG.

The protein resides in the cell inner membrane. Part of a membrane-bound complex that couples electron transfer with translocation of ions across the membrane. The polypeptide is Ion-translocating oxidoreductase complex subunit E (Shewanella sp. (strain W3-18-1)).